Here is a 303-residue protein sequence, read N- to C-terminus: Sporulation regulatory protein (303 aa).

In terms of domain architecture, FtsK spans 26-213 (TGRLRAGLRK…HRVNDKQTAE (188 aa)). Residue 43 to 50 (GANHSGKS) participates in ATP binding.

Its function is as follows. Involved in sporulation inhibition and pock formation. In Streptomyces azureus, this protein is Sporulation regulatory protein (spi).